The following is a 61-amino-acid chain: ITIEQGELVLNCISDKMMCEFEAAAEMVVPSPCPSEYDTCILETNIPPANQXPVHXIPXMH.

Post-translationally, glycosylated. Expressed by the calcifying mantle epithelium and incorporated into the shell's calcitic prismatic layer.

This is Calprismin from Pinna nobilis (Noble pen shell).